A 309-amino-acid chain; its full sequence is MILLPFHTRRLVSHVYCGLKPASKKKGIALEMARPSSNLADFREAFAKAKHIAVITGAGVSAESGVPTFRGAGGYWRKWQAQHLATPEAFARNPSRVWEFYHYRREVMLTKNPNPAHLAIAECETRLRKQGRKLVVITQNIDELHRKAGSRNLFEIHGSLFKTRCTSCGSVKENYKSPICPALAGKGAPEPDVQDAKIPVEQLPRCDENGCNGLLRPNVVWFGETLDSNLLGEVEKELEICDLCVVVGTSSVVYPAAMFAPQVAARGVPVAEFNMENTPATTSFTFHFQGPCGTTLPPAIARHETELIS.

The transit peptide at 1 to 35 (MILLPFHTRRLVSHVYCGLKPASKKKGIALEMARP) directs the protein to the mitochondrion. Positions 36–306 (SSNLADFREA…PPAIARHETE (271 aa)) constitute a Deacetylase sirtuin-type domain. 57–76 (GAGVSAESGVPTFRGAGGYW) contacts NAD(+). Substrate-binding residues include Y101 and R104. Residue 139-142 (QNID) participates in NAD(+) binding. The active-site Proton acceptor is H157. Residues C165, C168, C206, and C211 each coordinate Zn(2+). NAD(+)-binding positions include 248–250 (GTS), 274–276 (NME), and C292.

This sequence belongs to the sirtuin family. Class III subfamily. Zn(2+) is required as a cofactor.

It is found in the mitochondrion. The protein localises to the cytoplasm. Its subcellular location is the cytosol. The protein resides in the nucleus. It catalyses the reaction N(6)-malonyl-L-lysyl-[protein] + NAD(+) + H2O = 2''-O-malonyl-ADP-D-ribose + nicotinamide + L-lysyl-[protein]. The enzyme catalyses N(6)-succinyl-L-lysyl-[protein] + NAD(+) + H2O = 2''-O-succinyl-ADP-D-ribose + nicotinamide + L-lysyl-[protein]. It carries out the reaction N(6)-glutaryl-L-lysyl-[protein] + NAD(+) + H2O = 2''-O-glutaryl-ADP-D-ribose + nicotinamide + L-lysyl-[protein]. Its function is as follows. NAD-dependent lysine demalonylase, desuccinylase and deglutarylase that specifically removes malonyl, succinyl and glutaryl groups on target proteins. Has weak NAD-dependent protein deacetylase activity; however this activity may not be physiologically relevant in vivo. The protein is NAD-dependent protein deacylase sirtuin-5, mitochondrial (sirt5) of Xenopus tropicalis (Western clawed frog).